The primary structure comprises 258 residues: Deoxyribose-phosphate aldolase (258 aa).

D102 acts as the Proton donor/acceptor in catalysis. K165 acts as the Schiff-base intermediate with acetaldehyde in catalysis. K199 serves as the catalytic Proton donor/acceptor.

The protein belongs to the DeoC/FbaB aldolase family. DeoC type 2 subfamily.

The protein resides in the cytoplasm. It carries out the reaction 2-deoxy-D-ribose 5-phosphate = D-glyceraldehyde 3-phosphate + acetaldehyde. It functions in the pathway carbohydrate degradation; 2-deoxy-D-ribose 1-phosphate degradation; D-glyceraldehyde 3-phosphate and acetaldehyde from 2-deoxy-alpha-D-ribose 1-phosphate: step 2/2. Functionally, catalyzes a reversible aldol reaction between acetaldehyde and D-glyceraldehyde 3-phosphate to generate 2-deoxy-D-ribose 5-phosphate. The polypeptide is Deoxyribose-phosphate aldolase (Vibrio campbellii (strain ATCC BAA-1116)).